The chain runs to 430 residues: Glial fibrillary acidic protein (430 aa).

A disordered region spans residues 1-31 (MERRRITSARRSYASSETMVRGHGPTRHLGT). The interval 1 to 70 (MERRRITSAR…KETRASERAE (70 aa)) is head. Phosphothreonine; by AURKB and ROCK1 is present on Thr7. Positions 9-18 (ARRSYASSET) are enriched in polar residues. Residue Arg11 is modified to Omega-N-methylarginine. Ser12 is subject to Phosphoserine. Residue Arg21 is modified to Omega-N-methylarginine. Arg34 is modified (citrulline). Residue Ser36 is modified to Phosphoserine; by AURKB and ROCK1. Thr41 carries the phosphothreonine modification. The region spanning 67-375 (ERAEMMELND…KLLEGEENRI (309 aa)) is the IF rod domain. The coil 1A stretch occupies residues 71–102 (MMELNDRFASYIEKVRFLEQQNKALAAELNQL). A Phosphoserine modification is found at Ser80. The linker 1 stretch occupies residues 103–113 (RAKEPTKLADV). 2 positions are modified to phosphothreonine: Thr108 and Thr148. Positions 114–212 (YQAELRELRL…EEEVRELQEQ (99 aa)) are coil 1B. Positions 213–228 (LAQQQVHVEMDVAKPD) are linker 12. Residues 229–250 (LTAALREIRTQYEAVATSNMQE) form a coil 2A region. The segment at 251-254 (TEEW) is linker 2. The segment at 255-375 (YRSKFADLTD…KLLEGEENRI (121 aa)) is coil 2B. Ser267 carries the phosphoserine modification. A Citrulline modification is found at Arg268. Ser321 bears the Phosphoserine mark. The tract at residues 376 to 430 (TIPVQTFSNLQIRETSLDTKSVSEGHLKRNIVVKTVEMRDGEVIKESKQEHKDVM) is tail. Position 381 is a phosphothreonine (Thr381). Position 383 is a phosphoserine (Ser383). Residues Arg404 and Arg414 each carry the citrulline modification.

It belongs to the intermediate filament family. In terms of assembly, interacts with SYNM. As to quaternary structure, interacts with PSEN1 (via N-terminus). Phosphorylated by PKN1. In terms of tissue distribution, expressed in the cortex and hippocampus. Expression decreases following acute and chronic corticosterone treatment.

It is found in the cytoplasm. Its function is as follows. GFAP, a class-III intermediate filament, is a cell-specific marker that, during the development of the central nervous system, distinguishes astrocytes from other glial cells. This is Glial fibrillary acidic protein (Gfap) from Rattus norvegicus (Rat).